The chain runs to 296 residues: tRNA dimethylallyltransferase (296 aa).

Glycine 2 to threonine 9 lines the ATP pocket. Threonine 4–threonine 9 contributes to the substrate binding site. Interaction with substrate tRNA stretches follow at residues aspartate 27 to leucine 30, glutamine 151 to arginine 155, and arginine 232 to arginine 237.

This sequence belongs to the IPP transferase family. As to quaternary structure, monomer. It depends on Mg(2+) as a cofactor.

It catalyses the reaction adenosine(37) in tRNA + dimethylallyl diphosphate = N(6)-dimethylallyladenosine(37) in tRNA + diphosphate. Catalyzes the transfer of a dimethylallyl group onto the adenine at position 37 in tRNAs that read codons beginning with uridine, leading to the formation of N6-(dimethylallyl)adenosine (i(6)A). This chain is tRNA dimethylallyltransferase, found in Shewanella sp. (strain MR-4).